The primary structure comprises 671 residues: MADKKRYEELINILDQYSYDYYVIDNPTVEDAEYDQKMQELLKIEEAHPEWVTPESPSKRVGGEVLEGFKKVEHDTPMLSLANAFNRDDLADFDRRIRDKVGDDISYMCELKIDGLAVSLQYENGKYKQGATRGDGTVGEDITANLRTIRSIPMKLKKAYSIEVRGEAFMPKRSFQKLNEIREEEGQMLFANPRNAAAGSLRQLDTKIAASRNLDIFLYAVADFGEMGVETHSAGLDMLETLGLKVNKERRLCSNLEEVYAYIDEWTEKRAGLAYDIDGIVLKLNNLEQQRQMGTTVKSPRWSIAYKFPAEEVPTKLLDIELNVGRTGVITPTAVLEPVRVAGTTVSRASLHNEDLITEKDIRIGDTVLIKKAGDIIPEVIKSITEERTGSEKPFHMPKNCPTCDSELVRLEEEVALRCINPKCPAQIKEGLIHFVSRNAMNIDGLGEKVIIQLFSMHLIKDVADLFFLSKEKLLELERMGEKSVTNLLASIEASKQNSLEKLLFGLGIRHVGAKAAKSLAVHFETMDNLKIADKETLTSINDIGEKMADSIVTYFANEEVHDLLEELKRAGVNMTYTGPKLENMSEEELVFAGKTVVLTGKLEKLTRNDAKALIESLGGNVSGSVSKKTDVVVAGSDAGSKLAKAEELAIPIWSEEDLIEYLPDEGGLNE.

NAD(+) contacts are provided by residues 31–35, 80–81, and Glu-110; these read DAEYD and SL. Lys-112 functions as the N6-AMP-lysine intermediate in the catalytic mechanism. Positions 133, 167, 283, and 307 each coordinate NAD(+). Positions 401, 404, 419, and 424 each coordinate Zn(2+). The region spanning 587–671 is the BRCT domain; sequence EEELVFAGKT…YLPDEGGLNE (85 aa).

Belongs to the NAD-dependent DNA ligase family. LigA subfamily. Mg(2+) serves as cofactor. It depends on Mn(2+) as a cofactor.

The enzyme catalyses NAD(+) + (deoxyribonucleotide)n-3'-hydroxyl + 5'-phospho-(deoxyribonucleotide)m = (deoxyribonucleotide)n+m + AMP + beta-nicotinamide D-nucleotide.. Its function is as follows. DNA ligase that catalyzes the formation of phosphodiester linkages between 5'-phosphoryl and 3'-hydroxyl groups in double-stranded DNA using NAD as a coenzyme and as the energy source for the reaction. It is essential for DNA replication and repair of damaged DNA. The sequence is that of DNA ligase from Listeria innocua serovar 6a (strain ATCC BAA-680 / CLIP 11262).